Here is a 994-residue protein sequence, read N- to C-terminus: MPPTLLLLLLLLPPSLASPDRDIYALAKLKAALVPSPSATAPPPLADWDPAATSPAHCTFSGVTCDGRSRVVAINLTALPLHSGYLPPEIALLDSLANLTIAACCLPGHVPLELPTLPSLRHLNLSNNNLSGHFPVPDSGGGASPYFPSLELIDAYNNNLSGLLPPFSASHARLRYLHLGGNYFTGAIPDSYGDLAALEYLGLNGNTLSGHVPVSLSRLTRLREMYIGYYNQYDGGVPPEFGDLGALLRLDMSSCNLTGPVPPELGRLQRLDTLFLQWNRLSGEIPPQLGDLSSLASLDLSVNDLAGEIPPSLANLSNLKLLNLFRNHLRGSIPDFVAGFAQLEVLQLWDNNLTGNIPAGLGKNGRLKTLDLATNHLTGPIPADLCAGRRLEMLVLMENGLFGPIPDSLGDCKTLTRVRLAKNFLTGPVPAGLFNLPQANMVELTDNLLTGELPDVIGGDKIGMLLLGNNGIGGRIPPAIGNLPALQTLSLESNNFSGALPPEIGNLKNLSRLNVSGNALTGAIPDELIRCASLAAVDLSRNGFSGEIPESITSLKILCTLNVSRNRLTGELPPEMSNMTSLTTLDVSYNSLSGPVPMQGQFLVFNESSFVGNPGLCGGPVADACPPSMAGGGGGAGSQLRLRWDSKKMLVALVAAFAAVAVAFLGARKGCSAWRSAARRRSGAWKMTAFQKLEFSAEDVVECVKEDNIIGKGGAGIVYHGVTRGAELAIKRLVGRGGGEHDRGFSAEVTTLGRIRHRNIVRLLGFVSNRETNLLLYEYMPNGSLGEMLHGGKGGHLGWEARARVAAEAACGLCYLHHDCAPRIIHRDVKSNNILLDSAFEAHVADFGLAKFLGGATSECMSAIAGSYGYIAPEYAYTLRVDEKSDVYSFGVVLLELITGRRPVGGFGDGVDIVHWVRKVTAELPDNSDTAAVLAVADRRLTPEPVALMVNLYKVAMACVEEASTARPTMREVVHMLSNPNSAQPNSGDLLVTF.

The signal sequence occupies residues 1 to 17 (MPPTLLLLLLLLPPSLA). LRR repeat units follow at residues 73 to 93 (AINL…IALL), 94 to 117 (DSLA…LPTL), 118 to 141 (PSLR…DSGG), 147 to 171 (FPSL…SASH), 172 to 194 (ARLR…SYGD), 195 to 219 (LAAL…LSRL), 244 to 268 (LGAL…LGRL), 269 to 292 (QRLD…LGDL), 293 to 316 (SSLA…LANL), 318 to 340 (NLKL…VAGF), 341 to 364 (AQLE…LGKN), 365 to 388 (GRLK…LCAG), 390 to 412 (RLEM…LGDC), 413 to 436 (KTLT…LFNL), 438 to 459 (QANM…VIGG), 460 to 483 (DKIG…IGNL), 484 to 507 (PALQ…IGNL), 509 to 531 (NLSR…LIRC), 533 to 555 (SLAA…ITSL), 556 to 579 (KILC…MSNM), and 581 to 604 (SLTT…QFLV). Residues asparagine 75, asparagine 98, asparagine 124, asparagine 129, and asparagine 159 are each glycosylated (N-linked (GlcNAc...) asparagine). Asparagine 256 is a glycosylation site (N-linked (GlcNAc...) asparagine). Asparagine 315 carries N-linked (GlcNAc...) asparagine glycosylation. The N-linked (GlcNAc...) asparagine glycan is linked to asparagine 352. N-linked (GlcNAc...) asparagine glycosylation is found at asparagine 495, asparagine 509, and asparagine 514. N-linked (GlcNAc...) asparagine glycosylation is found at asparagine 562 and asparagine 578. Asparagine 606 carries an N-linked (GlcNAc...) asparagine glycan. A helical transmembrane segment spans residues 647 to 667 (KKMLVALVAAFAAVAVAFLGA). Residues 704–978 (VKEDNIIGKG…TMREVVHMLS (275 aa)) enclose the Protein kinase domain. Residues 710-718 (IGKGGAGIV) and lysine 731 each bind ATP. The active-site Proton acceptor is the aspartate 828.

Belongs to the protein kinase superfamily. Ser/Thr protein kinase family. Expressed in shoot apical meristem, and after transition to the reproductive phase, detected in the inflorescence and the floral meristems. Expressed uniformly throughout the meristems. Expressed also in floral organ primordia, such as the palea, lemma, lodicules, stamens, carpels and ovules.

The protein localises to the membrane. The catalysed reaction is L-seryl-[protein] + ATP = O-phospho-L-seryl-[protein] + ADP + H(+). The enzyme catalyses L-threonyl-[protein] + ATP = O-phospho-L-threonyl-[protein] + ADP + H(+). Receptor-like kinase protein that regulates the size of the floral meristem. The sequence is that of Leucine-rich repeat receptor-like kinase protein FLORAL ORGAN NUMBER1 (FON1) from Oryza sativa subsp. japonica (Rice).